Here is a 349-residue protein sequence, read N- to C-terminus: 3-dehydroquinate synthase (349 aa).

NAD(+)-binding positions include 63 to 68 (DGEDYK), 97 to 101 (GVIGD), 121 to 122 (TT), K134, K143, and 161 to 164 (FLQT). E176, H235, and H252 together coordinate Zn(2+).

It belongs to the sugar phosphate cyclases superfamily. Dehydroquinate synthase family. Co(2+) is required as a cofactor. It depends on Zn(2+) as a cofactor. NAD(+) serves as cofactor.

The protein resides in the cytoplasm. It catalyses the reaction 7-phospho-2-dehydro-3-deoxy-D-arabino-heptonate = 3-dehydroquinate + phosphate. The protein operates within metabolic intermediate biosynthesis; chorismate biosynthesis; chorismate from D-erythrose 4-phosphate and phosphoenolpyruvate: step 2/7. Catalyzes the conversion of 3-deoxy-D-arabino-heptulosonate 7-phosphate (DAHP) to dehydroquinate (DHQ). This chain is 3-dehydroquinate synthase, found in Nitratiruptor sp. (strain SB155-2).